Reading from the N-terminus, the 270-residue chain is NADPH-dependent aldehyde reductase-like protein, chloroplastic (270 aa).

The N-terminal 53 residues, 1 to 53 (MSTHSSISQPPLPLAGRVAIVTGSSRGIGRAIAIHLAELGARIVINYTSKAAD), are a transit peptide targeting the chloroplast. 26-50 (RGIGRAIAIHLAELGARIVINYTSK) is a binding site for NADP(+). Ser165 contacts substrate. The active-site Proton acceptor is the Tyr178.

The protein belongs to the short-chain dehydrogenases/reductases (SDR) family.

The protein localises to the plastid. It localises to the chloroplast. Its function is as follows. Aldehyde reductase that catalyzes the reduction of the aldehyde carbonyl groups on saturated and alpha,beta-unsaturated aldehydes with more than 5 carbons. The chain is NADPH-dependent aldehyde reductase-like protein, chloroplastic from Arabidopsis thaliana (Mouse-ear cress).